The chain runs to 251 residues: DNA repair protein RecO (251 aa).

It belongs to the RecO family.

In terms of biological role, involved in DNA repair and RecF pathway recombination. The sequence is that of DNA repair protein RecO from Macrococcus caseolyticus (strain JCSC5402) (Macrococcoides caseolyticum).